A 136-amino-acid polypeptide reads, in one-letter code: MNVIEDFRTGEPITLHQATNSVEFESVPNPLYMKLLWFERYGPIYQLKIQIRFNYNLRRALNLHKCWIELTITGSNRILTGPRFLKVLKKRLEIYLDNLGLICINNVIRGLNHVLYEEFNFVSSVIQNQSVAMNLY.

It belongs to the geminiviridae replication enhancer protein family. In terms of assembly, homooligomer. Interacts with the replication-associated protein (REP). Interacts with host proliferating cell nuclear antigen (PCNA). Interacts with host retinoblastoma-related protein 1 (RBR1), and may thereby deregulate the host cell cycle. Oligomerization and interaction with PCNA are necessary for optimal replication enhancement.

Functionally, increases viral DNA accumulation. Enhances infectivity and symptom expression. The chain is Replication enhancer from Beet curly top virus (strain California/Logan) (BCTV).